A 334-amino-acid chain; its full sequence is Probable 2-ketogluconate reductase (334 aa).

NAD(+) contacts are provided by residues 164-165, 244-246, and D270; these read RI and AGR. The active site involves R246. E275 is an active-site residue. The active-site Proton donor is H294. 294-297 lines the NAD(+) pocket; the sequence is HIGT.

This sequence belongs to the D-isomer specific 2-hydroxyacid dehydrogenase family.

Its subcellular location is the cytoplasm. It carries out the reaction D-gluconate + NADP(+) = 2-dehydro-D-gluconate + NADPH + H(+). Functionally, catalyzes the NADPH-dependent reduction of 2,5-diketo-D-gluconate (25DKG) to 5-keto-D-gluconate (5KDG), 2-keto-D-gluconate (2KDG) to D-gluconate, and 2-keto-L-gulonate (2KLG) to L-idonate (IA). The chain is Probable 2-ketogluconate reductase (tkrA) from Dictyostelium discoideum (Social amoeba).